We begin with the raw amino-acid sequence, 167 residues long: Outer envelope pore protein 21A, chloroplastic (167 aa).

The Cytoplasmic portion of the chain corresponds to 1–21 (METSLRYATNSRSLKIHAKEK). The chain crosses the membrane as a beta stranded span at residues 22–31 (FPVNSKTRLQ). Residues 32–55 (LHGELDTGAGVPSYFCAMIRYFFH) lie on the Chloroplast intermembrane side of the membrane. The chain crosses the membrane as a beta stranded span at residues 56–65 (EASTNLGVGL). Topologically, residues 66–71 (HYDKRE) are cytoplasmic. A beta stranded membrane pass occupies residues 72-81 (KLRCLVRGKK). Over 82–87 (KFPVIT) the chain is Chloroplast intermembrane. The beta stranded transmembrane segment at 88–97 (DEVVTFNIKG) threads the bilayer. The Cytoplasmic portion of the chain corresponds to 98–110 (RCDFDQDLVQRNA). Residues 111 to 120 (KGAAEFDWNI) form a beta stranded membrane-spanning segment. Residues 121 to 127 (WKFQKDQ) are Chloroplast intermembrane-facing. Residues 128-137 (DLRLRIGYEM) form a beta stranded membrane-spanning segment. The Cytoplasmic portion of the chain corresponds to 138 to 142 (FEKVP). Residues 143 to 152 (YMQIRENNWT) form a beta stranded membrane-spanning segment. Over 153-158 (FNTNLK) the chain is Chloroplast intermembrane. Residues 159 to 167 (GKWNVRYDL) traverse the membrane as a beta stranded segment.

It belongs to the plastid outer envelope porin OEP21 (TC 1.B.29) family.

The protein localises to the plastid. It localises to the etioplast membrane. The protein resides in the chloroplast outer membrane. Functionally, voltage-dependent rectifying anion channel that facilitates the translocation between chloroplast and cytoplasm of phosphorylated carbohydrates such as triosephosphate, 3-phosphoglycerate and inorganic phosphate (Pi) depending of ATP to triosephosphate ratio in the plastidial intermembrane space; in high triosephosphate/ATP conditions (e.g. photosynthesis), export of triosphosphate from chloroplast (outward rectifying channels), but in high ATP/triosephosphate conditions (e.g. dark phase), import of phosphosolutes (inward rectifying channels). The polypeptide is Outer envelope pore protein 21A, chloroplastic (OEP21A) (Arabidopsis thaliana (Mouse-ear cress)).